The sequence spans 790 residues: Serine/threonine-protein kinase DCLK3 (790 aa).

Residues 1-37 are disordered; that stretch reads MPAAPVLRPPPPPATPAPPAPSRPAPPIPGHRGPCDH. The span at 7-29 shows a compositional bias: pro residues; the sequence is LRPPPPPATPAPPAPSRPAPPIP. Positions 97-183 constitute a Doublecortin domain; it reads RVVTVVKLGG…KEPLTLKSIQ (87 aa). Low complexity predominate over residues 201–218; the sequence is HSRVPSPRLRSRLPSKLL. Disordered regions lie at residues 201–290 and 315–506; these read HSRV…SGEK and LQLG…KGII. Basic and acidic residues-rich tracts occupy residues 332–345, 352–400, 425–434, and 457–496; these read DLGR…EKLV, RPSE…ESQD, IDMRREDRHT, and TRGE…ERPS. In terms of domain architecture, Protein kinase spans 514 to 771; it reads YDIGGVIGDG…AEQVLQHPWI (258 aa). Residues 520–528 and K543 each bind ATP; that span reads IGDGNFATV. D635 (proton acceptor) is an active-site residue.

This sequence belongs to the protein kinase superfamily. CAMK Ser/Thr protein kinase family. CaMK subfamily. Highly expressed in brain and to a lower extent in liver and kidney.

Its subcellular location is the cytoplasm. The protein localises to the nucleus. It catalyses the reaction L-seryl-[protein] + ATP = O-phospho-L-seryl-[protein] + ADP + H(+). The enzyme catalyses L-threonyl-[protein] + ATP = O-phospho-L-threonyl-[protein] + ADP + H(+). The protein is Serine/threonine-protein kinase DCLK3 (Dclk3) of Mus musculus (Mouse).